Here is a 333-residue protein sequence, read N- to C-terminus: D-fructose 1,6-bisphosphatase class 2/sedoheptulose 1,7-bisphosphatase (333 aa).

Residues aspartate 33, glutamate 57, aspartate 85, and glutamate 88 each coordinate Mn(2+). Substrate contacts are provided by residues 88–90 (EGT), tyrosine 119, 164–166 (RTR), and 186–188 (DGD). Glutamate 213 contacts Mn(2+).

Belongs to the FBPase class 2 family. In terms of assembly, homotetramer. The cofactor is Mn(2+).

It carries out the reaction beta-D-fructose 1,6-bisphosphate + H2O = beta-D-fructose 6-phosphate + phosphate. It catalyses the reaction D-sedoheptulose 1,7-bisphosphate + H2O = D-sedoheptulose 7-phosphate + phosphate. The protein operates within carbohydrate biosynthesis; Calvin cycle. Functionally, catalyzes the hydrolysis of fructose 1,6-bisphosphate (Fru 1,6-P2) and sedoheptulose 1,7-bisphosphate (Sed 1,7-P2) to fructose 6-phosphate and sedoheptulose 7-phosphate, respectively. The sequence is that of D-fructose 1,6-bisphosphatase class 2/sedoheptulose 1,7-bisphosphatase from Prochlorococcus marinus (strain MIT 9312).